Here is a 136-residue protein sequence, read N- to C-terminus: ATP synthase F(0) complex subunit C1, mitochondrial (136 aa).

The N-terminal 61 residues, 1-61, are a transit peptide targeting the mitochondrion; the sequence is MQTTKALLIS…REFQTSVISR (61 aa). Residues 77-97 traverse the membrane as a helical segment; that stretch reads VGVAGSGAGIGTVFGSLIIGY. Lys-104 bears the N6,N6,N6-trimethyllysine mark. The chain crosses the membrane as a helical span at residues 112–132; the sequence is ILGFALSEAMGLFCLMVAFLI.

The protein belongs to the ATPase C chain family. In terms of assembly, homooctamer; the c-ring consists of eight c subunits forming a circle, and each subunit adopts a hairpin shape. Component of the ATP synthase complex composed at least of ATP5F1A/subunit alpha, ATP5F1B/subunit beta, ATP5MC1/subunit c (homooctomer), MT-ATP6/subunit a, MT-ATP8/subunit 8, ATP5ME/subunit e, ATP5MF/subunit f, ATP5MG/subunit g, ATP5MK/subunit k, ATP5MJ/subunit j, ATP5F1C/subunit gamma, ATP5F1D/subunit delta, ATP5F1E/subunit epsilon, ATP5PF/subunit F6, ATP5PB/subunit b, ATP5PD/subunit d, ATP5PO/subunit OSCP. ATP synthase complex consists of a soluble F(1) head domain (subunits alpha(3) and beta(3)) - the catalytic core - and a membrane F(0) domain - the membrane proton channel (subunits c, a, 8, e, f, g, k and j). These two domains are linked by a central stalk (subunits gamma, delta, and epsilon) rotating inside the F1 region and a stationary peripheral stalk (subunits F6, b, d, and OSCP). Interacts with TMEM70 (homooligomer form); this interaction facilitates the oligomer formation of subunit c/ATP5MC1 (c-ring) and the c-ring membrane insertion and also protects ATP5MC1 against intramitochondrial proteolysis. Trimethylated by ATPSCKMT at Lys-104. Methylation is required for proper incorporation of the C subunit into the ATP synthase complex and mitochondrial respiration.

Its subcellular location is the mitochondrion membrane. The catalysed reaction is H(+)(in) = H(+)(out). In terms of biological role, subunit c, of the mitochondrial membrane ATP synthase complex (F(1)F(0) ATP synthase or Complex V) that produces ATP from ADP in the presence of a proton gradient across the membrane which is generated by electron transport complexes of the respiratory chain. ATP synthase complex consist of a soluble F(1) head domain - the catalytic core - and a membrane F(1) domain - the membrane proton channel. These two domains are linked by a central stalk rotating inside the F(1) region and a stationary peripheral stalk. During catalysis, ATP synthesis in the catalytic domain of F(1) is coupled via a rotary mechanism of the central stalk subunits to proton translocation. With the subunit a (MT-ATP6), forms the proton-conducting channel in the F(0) domain, that contains two crucial half-channels (inlet and outlet) that facilitate proton movement from the mitochondrial intermembrane space (IMS) into the matrix. Protons are taken up via the inlet half-channel and released through the outlet half-channel, following a Grotthuss mechanism. This is ATP synthase F(0) complex subunit C1, mitochondrial from Rattus norvegicus (Rat).